We begin with the raw amino-acid sequence, 206 residues long: Methyl-coenzyme M reductase operon protein C (206 aa).

As to quaternary structure, MCR is composed of three subunits: alpha, beta, and gamma. The function of proteins C and D is not known.

The sequence is that of Methyl-coenzyme M reductase operon protein C (mcrC) from Methanosarcina barkeri (strain Fusaro / DSM 804).